The following is a 456-amino-acid chain: Ribonuclease inhibitor (456 aa).

Residue M1 is modified to N-acetylmethionine. LRR repeat units lie at residues 15 to 43 (WTEL…CKDI), 44 to 71 (GSAL…VHLV), 72 to 100 (LQGL…CGVL), 101 to 128 (PSTL…LRLL), 129 to 157 (CEGL…CEPL), 158 to 185 (ASVL…ARVL), 186 to 214 (GQGL…CKDL), 215 to 242 (CGIV…IAEL), 243 to 271 (CPGL…CRDL), 272 to 299 (CRVL…ARLL), 300 to 328 (CESL…CQHV), 329 to 356 (SLML…IQEL), 357 to 385 (CQAL…CSSL), 386 to 413 (ASLL…VLQL), and 414 to 442 (LGSL…EDRL). S86 carries the phosphoserine modification.

Forms high-affinity heterodimers with RNASE1, ANG and RNASE2.

Its subcellular location is the cytoplasm. The protein resides in the nucleus. Ribonuclease inhibitor which inhibits RNASE1, RNASE2 and angiogenin (ANG). May play a role in redox homeostasis. Required to inhibit the cytotoxic tRNA ribonuclease activity of ANG in the cytoplasm in absence of stress. Relocates to the nucleus in response to stress, relieving inhibition of ANG in the cytoplasm, and inhibiting the angiogenic activity of ANG in the nucleus. The protein is Ribonuclease inhibitor (RNH1) of Sus scrofa (Pig).